The primary structure comprises 746 residues: Protein C-mannosyl-transferase DPY19L1 (746 aa).

A disordered region spans residues 1 to 68 (MVLQARSKHR…RAETAAPAPD (68 aa)). The segment covering 14–27 (PRPPRPARSSPPPL) has biased composition (pro residues). 12 consecutive transmembrane segments (helical) span residues 93–113 (STLLLASFAALLHWSHITQLF), 139–159 (YSYFKTIVEAPSFLSGVWMIM), 227–247 (ACFYVAVIFMLNGLMMALFFI), 248–268 (YGTYLSGSRLGGLVTVLCFFF), 308–328 (YRGSLIALCISNVFFMLPWQF), 329–349 (AQFVLLTQIASLFAVYVVGYI), 357–377 (IIYTHMISLVLCFVLMFGNSM), 378–398 (LLTSYYASSLVIIWGMLAMKP), 405–425 (VSELSLWVIQGCCWLFGTVTL), 481–501 (LLLPVVLAIVAAIGRKIINDM), 520–540 (GELVYHALQLFAYTALGILIM), and 562–582 (LFGWLFGKVHPGAVVFAVLAA).

This sequence belongs to the dpy-19 family.

Its subcellular location is the endoplasmic reticulum membrane. The enzyme catalyses L-tryptophyl-[protein] + a di-trans,poly-cis-dolichyl beta-D-mannosyl phosphate = C-alpha-D-mannosyl-L-tryptophyl-[protein] + a di-trans,poly-cis-dolichyl phosphate + H(+). Its pathway is protein modification; protein glycosylation. Its function is as follows. C-mannosyltransferase that mediates the C-mannosylation tryptophan residues on target proteins. The reaction occurs on the luminal side of the endoplasmic reticulum and involves the transfer of a mannose unit from a dolichylphosphate mannose (Dol-P-Man) donor to an acceptor protein containing a WxxW consensus sequence. C-mannosylates the first two tryptophans in the WxxWxxWxxC sequence motif in thrombospondin (TSP) type-1 repeats of UNC5A. Regulates neurite extension during development. The protein is Protein C-mannosyl-transferase DPY19L1 (Dpy19l1) of Rattus norvegicus (Rat).